The sequence spans 424 residues: PtdIns3K complex I subunit atg38 (424 aa).

Positions L50–T78 form a coiled coil. Residues L73–Q212 are required for interaction with atg8. The AIM signature appears at F178 to V181. The span at L268 to K284 shows a compositional bias: basic and acidic residues. A disordered region spans residues L268–E299. The stretch at T390–D420 forms a coiled coil.

The protein belongs to the ATG38 family. As to quaternary structure, component of the autophagy-specific vps34 PI3-kinase complex I composed of vps15, atg6, pik3/vps34, atg14 and atg38. Interacts (via AIM motif) with atg8; the interaction is direct and leads to recruitment of the autophagy-specific vps34 PI3-kinase complex I to the phagophore assembly site.

The protein resides in the preautophagosomal structure membrane. The protein localises to the cytoplasm. It localises to the cytosol. In terms of biological role, functions as a part of the autophagy-specific VPS34 PI3-kinase complex I that plays a role in autophagosome assembly. This complex is essential to recruit the atg8-phosphatidylinositol conjugate and the atg12-atg5 conjugate to the pre-autophagosomal structure. By binding to atg8 at the phagophore assembly site, atg38 helps establish a positive feedback loop for recruitment of phagophore assembly proteins, including atg8. The sequence is that of PtdIns3K complex I subunit atg38 from Schizosaccharomyces pombe (strain 972 / ATCC 24843) (Fission yeast).